A 406-amino-acid chain; its full sequence is DNA primase large subunit PriL (406 aa).

The [4Fe-4S] cluster site is built by Cys302, Cys375, Cys384, and Cys389.

It belongs to the eukaryotic-type primase large subunit family. In terms of assembly, heterodimer of a small subunit (PriS) and a large subunit (PriL). Requires [4Fe-4S] cluster as cofactor.

Functionally, regulatory subunit of DNA primase, an RNA polymerase that catalyzes the synthesis of short RNA molecules used as primers for DNA polymerase during DNA replication. Stabilizes and modulates the activity of the small subunit, increasing the rate of DNA synthesis, and conferring RNA synthesis capability. The DNA polymerase activity may enable DNA primase to also catalyze primer extension after primer synthesis. May also play a role in DNA repair. In Methanopyrus kandleri (strain AV19 / DSM 6324 / JCM 9639 / NBRC 100938), this protein is DNA primase large subunit PriL.